Consider the following 438-residue polypeptide: UPF0229 protein Smed_1028 (438 aa).

A disordered region spans residues 55-107; sequence PARGVNEPAFQPDSNSGERRHVLPGNREFAAGDRIPKRGGGGGAGNAGAGTGQ. A compositionally biased stretch (gly residues) spans 92-105; sequence RGGGGGAGNAGAGT.

Belongs to the UPF0229 family.

The sequence is that of UPF0229 protein Smed_1028 from Sinorhizobium medicae (strain WSM419) (Ensifer medicae).